The following is a 397-amino-acid chain: Proteinase-activated receptor 2 (397 aa).

The first 25 residues, 1–25 (MRSPSAAWLLGAAILLAASLSCSGT), serve as a signal peptide directing secretion. Residues 26 to 36 (IQGTNRSSKGR) constitute a propeptide, removed for receptor activation. Residue Asn-30 is glycosylated (N-linked (GlcNAc...) asparagine). The Extracellular segment spans residues 37 to 71 (SLIGKVDGTSHVTGKGVTVETVFSVDEFSASVLTG). A helical membrane pass occupies residues 72-101 (KLTTVFLPIVYTIVFVVGLPSNGMALWVFL). Residues 102-108 (FRTKKKH) lie on the Cytoplasmic side of the membrane. Residues 109–137 (PAVIYMANLALADLLSVIWFPLKIAYHIH) traverse the membrane as a helical segment. Residues 138 to 149 (GNNWIYGEALCN) lie on the Extracellular side of the membrane. The cysteines at positions 148 and 226 are disulfide-linked. The chain crosses the membrane as a helical span at residues 150–177 (VLIGFFYGNMYCSILFMTCLSVQRYWVI). Topologically, residues 178–183 (VNPMGH) are cytoplasmic. A helical transmembrane segment spans residues 184 to 211 (SRKKANIAIGISLAIWLLILLVTIPLYV). Over 212 to 235 (VKQTIFIPALNITTCHDVLPEQLL) the chain is Extracellular. N-linked (GlcNAc...) asparagine glycosylation occurs at Asn-222. The helical transmembrane segment at 236 to 269 (VGDMFNYFLSLAIGVFLFPAFLTASAYVLMIRML) threads the bilayer. Topologically, residues 270–277 (RSSAMDEN) are cytoplasmic. A helical membrane pass occupies residues 278–317 (SEKKRKRAIKLIVTVLAMYLICFTPSNLLLVVHYFLIKSQ). The Extracellular portion of the chain corresponds to 318 to 323 (GQSHVY). A helical membrane pass occupies residues 324-347 (ALYIVALCLSTLNSCIDPFVYYFV). Topologically, residues 348 to 397 (SHDFRDHAKNALLCRSVRTVKQMQVSLTSKKHSRKSSSYSSSSTTVKTSY) are cytoplasmic. The S-palmitoyl cysteine moiety is linked to residue Cys-361. Residues 373–397 (SLTSKKHSRKSSSYSSSSTTVKTSY) form a disordered region. Low complexity predominate over residues 383–397 (SSSYSSSSTTVKTSY).

This sequence belongs to the G-protein coupled receptor 1 family. As to quaternary structure, interacts with TLR4, COPS5 and TMED2. Interacts with GNAQ, GNA11, GNA12, GNA13 and GNA14. A proteolytic cleavage generates a new N-terminus that functions as a tethered ligand. Activating serine proteases include trypsin, mast cell tryptase, coagulation factors VII and Xa, myeloblastin/PRTN3 and membrane-type serine protease 1/ST14. Subsequent cleavage by serine proteases, including neutrophil elastase and cathepsin G, leads to receptor deactivation. At least in part, implicated proteases are also shown to activate the receptor; the glycosylation status of the receptor is thought to contribute to the difference. In addition to conventional trypsin-like proteases activated by other proteases and glycosidases derived from bacteria, fungi and insects. Activated by serine protease allergens such as dust mite Der p3 and Der p9 and mold Pen c13. Activated by P.gingivalis arginine-specific (trypsin-like) cysteine proteinases called gingipains. Activated by S.griseus exogenous chitinase. Activated by A.alternata aspartate protease; the cleavage generates non-conventional processed forms. Proteolytically cleaved by coagulation factor Xa (F10); cleavage results in activation of F2RL1-dependent signaling. Post-translationally, N-glycosylated and sialylated. In terms of processing, multiple phosphorylated on serine and threonine residues in the cytoplasmic region upon receptor activation; required for receptor desensitization and recruitment of beta-arrestin. Monoubiquitinated by CBL at the plasma membrane and in early endosomes; not required for receptor endocytosis but for translocation to late endosomes or lysosomes. Deubiquitination involves STAMBP and USP8; required for lysosomal trafficking and receptor degradation. In terms of tissue distribution, widely expressed in tissues with especially high levels in pancreas, liver, kidney, small intestine, and colon. Moderate expression is detected in many organs, but none in brain or skeletal muscle. Expressed in endothelial cells.

Its subcellular location is the cell membrane. With respect to regulation, activated upon interaction by mucunain, a cowhage (Mucuna pruriens) plant cysteine proteinase. Receptor for trypsin and trypsin-like enzymes coupled to G proteins. Its function is mediated through the activation of several signaling pathways including phospholipase C (PLC), intracellular calcium, mitogen-activated protein kinase (MAPK), I-kappaB kinase/NF-kappaB and Rho. Can also be transactivated by cleaved F2R/PAR1. Involved in modulation of inflammatory responses and regulation of innate and adaptive immunity, and acts as a sensor for proteolytic enzymes generated during infection. Generally is promoting inflammation. Can signal synergistically with TLR4 and probably TLR2 in inflammatory responses and modulates TLR3 signaling. Has a protective role in establishing the endothelial barrier; the activity involves coagulation factor X. Regulates endothelial cell barrier integrity during neutrophil extravasation, probably following proteolytic cleavage by PRTN3. Proposed to have a bronchoprotective role in airway epithelium, but also shown to compromise the airway epithelial barrier by interrupting E-cadherin adhesion. Involved in the regulation of vascular tone; activation results in hypotension presumably mediated by vasodilation. Associates with a subset of G proteins alpha subunits such as GNAQ, GNA11, GNA14, GNA12 and GNA13, but probably not with G(o)-alpha, G(i) subunit alpha-1 and G(i) subunit alpha-2. However, according to PubMed:21627585 can signal through G(i) subunit alpha. Believed to be a class B receptor which internalizes as a complex with arrestin and traffic with it to endosomal vesicles, presumably as desensitized receptor, for extended periods of time. Mediates inhibition of TNF-alpha stimulated JNK phosphorylation via coupling to GNAQ and GNA11; the function involves dissociation of RIPK1 and TRADD from TNFR1. Mediates phosphorylation of nuclear factor NF-kappa-B RELA subunit at 'Ser-536'; the function involves IKBKB and is predominantly independent of G proteins. Involved in cellular migration. Involved in cytoskeletal rearrangement and chemotaxis through beta-arrestin-promoted scaffolds; the function is independent of GNAQ and GNA11 and involves promotion of cofilin dephosphorylation and actin filament severing. Induces redistribution of COPS5 from the plasma membrane to the cytosol and activation of the JNK cascade is mediated by COPS5. Involved in the recruitment of leukocytes to the sites of inflammation and is the major PAR receptor capable of modulating eosinophil function such as pro-inflammatory cytokine secretion, superoxide production and degranulation. During inflammation promotes dendritic cell maturation, trafficking to the lymph nodes and subsequent T-cell activation. Involved in antimicrobial response of innate immune cells; activation enhances phagocytosis of Gram-positive and killing of Gram-negative bacteria. Acts synergistically with interferon-gamma in enhancing antiviral responses. Implicated in a number of acute and chronic inflammatory diseases such as of the joints, lungs, brain, gastrointestinal tract, periodontium, skin, and vascular systems, and in autoimmune disorders. Probably mediates activation of pro-inflammatory and pro-fibrotic responses in fibroblasts, triggered by coagulation factor Xa (F10). Mediates activation of barrier protective signaling responses in endothelial cells, triggered by coagulation factor Xa (F10). The chain is Proteinase-activated receptor 2 (F2RL1) from Homo sapiens (Human).